The sequence spans 166 residues: Urease accessory protein UreE (166 aa).

A disordered region spans residues 135-156 (EQGAYGGGHHHSHHGDEEFNYG).

The protein belongs to the UreE family.

The protein resides in the cytoplasm. Involved in urease metallocenter assembly. Binds nickel. Probably functions as a nickel donor during metallocenter assembly. This Ectopseudomonas mendocina (strain ymp) (Pseudomonas mendocina) protein is Urease accessory protein UreE.